The sequence spans 664 residues: Acetolactate synthase 2, chloroplastic (664 aa).

Low complexity predominate over residues 1–34 (MAAAAAAPSPSFSKTLSSSSSKSSTLLPRSTFPF). The segment at 1–51 (MAAAAAAPSPSFSKTLSSSSSKSSTLLPRSTFPFPHHPHKTTPPPLHLTPT) is disordered. Residues 1–91 (MAAAAAAPSP…VSRFAPDEPR (91 aa)) constitute a chloroplast transit peptide. Position 138 (Glu-138) interacts with thiamine diphosphate. A disulfide bridge links Cys-158 with Cys-304. Residues Arg-240, 346 to 367 (HGTV…FGVR), and 389 to 408 (DIDS…ICAD) each bind FAD. The interval 481 to 561 (QHQMWAAQYY…VKIMLLNNQH (81 aa)) is thiamine pyrophosphate binding. The Mg(2+) site is built by Asp-532 and Asn-559.

It belongs to the TPP enzyme family. Requires Mg(2+) as cofactor. It depends on thiamine diphosphate as a cofactor.

It is found in the plastid. Its subcellular location is the chloroplast. The catalysed reaction is 2 pyruvate + H(+) = (2S)-2-acetolactate + CO2. It participates in amino-acid biosynthesis; L-isoleucine biosynthesis; L-isoleucine from 2-oxobutanoate: step 1/4. The protein operates within amino-acid biosynthesis; L-valine biosynthesis; L-valine from pyruvate: step 1/4. The sequence is that of Acetolactate synthase 2, chloroplastic (ALS SURB) from Nicotiana tabacum (Common tobacco).